The following is a 425-amino-acid chain: MESPDSSSGSAPPRVLRRQQQQPGSAPELPPGFRFHPTDEELVVHYLKKKAASVPLPVTIIAEVDLYKFDPWDLPEKANFGEQEWYFFSPRDRKYPNGARPNRAATSGYWKATGTDKPIMSSGSTREKVGVKKALVFYRGKPPKGVKTNWIMHEYRLTDTSSSAAAVATTRRPPPPITGGSKGAVSLRLDDWVLCRIYKKTNKAGAGQRSMECEDSVEDAVAAYAPSSQQHATAAAGMAGSDGAGGVAAAHGGDYSSLLHHDSHEDTFLVNGLLTAEDAAGLSTGASSLSQLAAAARAAATPCDATKQLLAPSPTPFNWFEAFLPRAKEFPSGLSRSSRDIGDMSLSSTVDRSLSEAGAVAIDTGDAANGANTMPAFINPLGVQGATYQQHQAIMGASLPSESAAAAAACNFQHPFQLSRVNWDS.

The segment covering 1-10 has biased composition (polar residues); sequence MESPDSSSGS. Residues 1-34 are disordered; that stretch reads MESPDSSSGSAPPRVLRRQQQQPGSAPELPPGFR. Positions 12–23 are enriched in low complexity; the sequence is PPRVLRRQQQQP. The region spanning 29–200 is the NAC domain; sequence LPPGFRFHPT…DWVLCRIYKK (172 aa). Residues 129–206 mediate DNA binding; that stretch reads VGVKKALVFY…IYKKTNKAGA (78 aa).

Highest expression in stamens. Expressed in leaves.

Its subcellular location is the nucleus. Functionally, transcription factor of the NAC family associated with male fertility. Involved in anther development, but not in senescence. Reduced expression of NAC5 via RNAi leads to male-sterility. The chain is NAC domain-containing protein 10 from Oryza sativa subsp. japonica (Rice).